The following is a 432-amino-acid chain: Glutamate-1-semialdehyde 2,1-aminomutase 2 (432 aa).

Lys-268 carries the N6-(pyridoxal phosphate)lysine modification.

Belongs to the class-III pyridoxal-phosphate-dependent aminotransferase family. HemL subfamily. As to quaternary structure, homodimer. The cofactor is pyridoxal 5'-phosphate.

It is found in the cytoplasm. The catalysed reaction is (S)-4-amino-5-oxopentanoate = 5-aminolevulinate. It functions in the pathway porphyrin-containing compound metabolism; protoporphyrin-IX biosynthesis; 5-aminolevulinate from L-glutamyl-tRNA(Glu): step 2/2. This Listeria innocua serovar 6a (strain ATCC BAA-680 / CLIP 11262) protein is Glutamate-1-semialdehyde 2,1-aminomutase 2.